Reading from the N-terminus, the 80-residue chain is Protein KorB (80 aa).

2 consecutive DNA-binding regions (H-T-H motif) follow at residues 13–32 and 56–75; these read AEAA…AELD and NEVT…AEAE.

Its function is as follows. Repressor for the transcription of certain pIJ101 promoters, including those the from kilA and kilB loci. This chain is Protein KorB (korB), found in Streptomyces lividans.